The following is a 148-amino-acid chain: Flavodoxin (148 aa).

Positions 4–145 constitute a Flavodoxin-like domain; the sequence is ALIVYGSTTG…DIVGWAHDVR (142 aa).

It belongs to the flavodoxin family. The cofactor is FMN.

Low-potential electron donor to a number of redox enzymes. The chain is Flavodoxin from Nitratidesulfovibrio vulgaris (strain ATCC 29579 / DSM 644 / CCUG 34227 / NCIMB 8303 / VKM B-1760 / Hildenborough) (Desulfovibrio vulgaris).